Here is a 174-residue protein sequence, read N- to C-terminus: Flavodoxin (174 aa).

The Flavodoxin-like domain maps to 4–165 (VGLFYGSDTG…RVEKWCKQIY (162 aa)).

The protein belongs to the flavodoxin family. The cofactor is FMN.

Functionally, low-potential electron donor to a number of redox enzymes. This is Flavodoxin (fldA) from Haemophilus influenzae (strain ATCC 51907 / DSM 11121 / KW20 / Rd).